The sequence spans 223 residues: Deoxyribose-phosphate aldolase (223 aa).

Asp91 acts as the Proton donor/acceptor in catalysis. The Schiff-base intermediate with acetaldehyde role is filled by Lys153. Catalysis depends on Lys183, which acts as the Proton donor/acceptor.

The protein belongs to the DeoC/FbaB aldolase family. DeoC type 1 subfamily.

Its subcellular location is the cytoplasm. It carries out the reaction 2-deoxy-D-ribose 5-phosphate = D-glyceraldehyde 3-phosphate + acetaldehyde. The protein operates within carbohydrate degradation; 2-deoxy-D-ribose 1-phosphate degradation; D-glyceraldehyde 3-phosphate and acetaldehyde from 2-deoxy-alpha-D-ribose 1-phosphate: step 2/2. Catalyzes a reversible aldol reaction between acetaldehyde and D-glyceraldehyde 3-phosphate to generate 2-deoxy-D-ribose 5-phosphate. The polypeptide is Deoxyribose-phosphate aldolase (Mycoplasmopsis synoviae (strain 53) (Mycoplasma synoviae)).